A 348-amino-acid chain; its full sequence is A-type ATP synthase subunit C (348 aa).

The protein belongs to the V-ATPase V0D/AC39 subunit family. Has multiple subunits with at least A(3), B(3), C, D, E, F, H, I and proteolipid K(x).

The protein resides in the cell membrane. Component of the A-type ATP synthase that produces ATP from ADP in the presence of a proton gradient across the membrane. The sequence is that of A-type ATP synthase subunit C from Haloferax volcanii (strain ATCC 29605 / DSM 3757 / JCM 8879 / NBRC 14742 / NCIMB 2012 / VKM B-1768 / DS2) (Halobacterium volcanii).